The following is a 335-amino-acid chain: Phosphate acyltransferase (335 aa).

It belongs to the PlsX family. As to quaternary structure, homodimer. Probably interacts with PlsY.

It localises to the cytoplasm. The enzyme catalyses a fatty acyl-[ACP] + phosphate = an acyl phosphate + holo-[ACP]. Its pathway is lipid metabolism; phospholipid metabolism. In terms of biological role, catalyzes the reversible formation of acyl-phosphate (acyl-PO(4)) from acyl-[acyl-carrier-protein] (acyl-ACP). This enzyme utilizes acyl-ACP as fatty acyl donor, but not acyl-CoA. In Streptococcus equi subsp. zooepidemicus (strain MGCS10565), this protein is Phosphate acyltransferase.